The primary structure comprises 1123 residues: Adenylyl cyclase X E (1123 aa).

The Cytoplasmic segment spans residues 1–47; sequence MPRSLGNCQLNYSKERMWEPGYLKAKCAELRLESEFRLYRIRLWKSY. The helical transmembrane segment at 48–68 threads the bilayer; that stretch reads LLTFFMLHIFVTSVHCALLLA. Topologically, residues 69–73 are extracellular; sequence TIERR. Residues 74 to 94 traverse the membrane as a helical segment; the sequence is SIIYFDVALSIGCALVLILVL. The Cytoplasmic segment spans residues 95 to 106; sequence SVNFCDEFIAKH. Residues 107–127 form a helical membrane-spanning segment; it reads TWYMYASSIFASLTLVFADLT. Residues 128–137 are Extracellular-facing; that stretch reads ESIYHTYAHS. The chain crosses the membrane as a helical span at residues 138–158; the sequence is WILGTFYDTYIIYMIYMFLPI. The Cytoplasmic portion of the chain corresponds to 159–163; that stretch reads HFISG. A helical membrane pass occupies residues 164–184; it reads AVLLALLVSGLYILYFVIFIA. The Extracellular portion of the chain corresponds to 185–196; sequence QGFAQFASALFS. The helical transmembrane segment at 197–217 threads the bilayer; the sequence is VGGMSVDIVHYLCLNLVGIFY. At 218–581 the chain is on the cytoplasmic side; the sequence is RVMNDTVVRS…YLKQTDYMYK (364 aa). ATP-binding positions include 346 to 348 and Arg392; that span reads LGD. Asp348 serves as a coordination point for Mg(2+). The chain crosses the membrane as a helical span at residues 582–602; that stretch reads YSIILSASVGCSLVYIELMDT. Residues 603 to 608 lie on the Extracellular side of the membrane; that stretch reads QMICSS. Residues 609 to 629 traverse the membrane as a helical segment; sequence CFVLPASVATIQCILALIAWY. Residues 630-667 are Cytoplasmic-facing; that stretch reads KKYCWTRYGRNNVPHHYNGFSCFIFRIHDKILNSLPIR. A helical transmembrane segment spans residues 668 to 688; that stretch reads ICIYLFLMISSFFVMCLIVMS. Residues 689–719 are Extracellular-facing; it reads CQREEFEMAYIEERLFHYEQEAHICFHPWVT. The helical transmembrane segment at 720–740 threads the bilayer; the sequence is TNMLSLMICLTFTFAHIPIMV. Over 741–743 the chain is Cytoplasmic; sequence KTA. Residues 744-764 form a helical membrane-spanning segment; it reads VAILETLAYLLLIFFQFDFVF. Residues 765-772 lie on the Extracellular side of the membrane; it reads HHSVTTNP. Residues 773-793 traverse the membrane as a helical segment; that stretch reads YFKSEYAHALLICITFLIMFV. Residues 794–1123 lie on the Cytoplasmic side of the membrane; that stretch reads KERQIEFTNK…STSRHTLQSL (330 aa). ATP contacts are provided by residues Lys903, 1014–1016, 1021–1025, and Lys1061; these read DIW and NMASR.

Belongs to the adenylyl cyclase class-4/guanylyl cyclase family. Expressed in labella.

Its subcellular location is the membrane. The catalysed reaction is ATP = 3',5'-cyclic AMP + diphosphate. Its function is as follows. Catalyzes the formation of the signaling molecule cAMP in response to G-protein signaling. This is Adenylyl cyclase X E from Drosophila melanogaster (Fruit fly).